The following is a 264-amino-acid chain: Thiazole synthase (264 aa).

The Schiff-base intermediate with DXP role is filled by lysine 106. 1-deoxy-D-xylulose 5-phosphate is bound by residues glycine 167, 193-194, and 215-216; these read AG and NT.

This sequence belongs to the ThiG family. In terms of assembly, homotetramer. Forms heterodimers with either ThiH or ThiS.

Its subcellular location is the cytoplasm. The catalysed reaction is [ThiS sulfur-carrier protein]-C-terminal-Gly-aminoethanethioate + 2-iminoacetate + 1-deoxy-D-xylulose 5-phosphate = [ThiS sulfur-carrier protein]-C-terminal Gly-Gly + 2-[(2R,5Z)-2-carboxy-4-methylthiazol-5(2H)-ylidene]ethyl phosphate + 2 H2O + H(+). Its pathway is cofactor biosynthesis; thiamine diphosphate biosynthesis. Catalyzes the rearrangement of 1-deoxy-D-xylulose 5-phosphate (DXP) to produce the thiazole phosphate moiety of thiamine. Sulfur is provided by the thiocarboxylate moiety of the carrier protein ThiS. In vitro, sulfur can be provided by H(2)S. The polypeptide is Thiazole synthase (Xanthomonas axonopodis pv. citri (strain 306)).